The primary structure comprises 135 residues: MLSPKRTRFRKQHRGRMKGISYRGNHISFGKYALQALEPAWITSRQIEAGRRAMTRNARRGGKIWVRIFPDKPVTVRPAETRMGSGKGSPEYWVAVVKPGRILYEMGGVTENIARRAISIASSKMPIRTQFIISG.

This sequence belongs to the universal ribosomal protein uL16 family. As to quaternary structure, part of the 50S ribosomal subunit.

The protein localises to the plastid. Its subcellular location is the chloroplast. The polypeptide is Large ribosomal subunit protein uL16c (Daucus carota (Wild carrot)).